The sequence spans 344 residues: GTPase Obg (344 aa).

Positions 1-159 (MKFLDLAKVY…RTIWLRLKLI (159 aa)) constitute an Obg domain. One can recognise an OBG-type G domain in the interval 160–327 (ADVGLLGLPN…VLRALRARID (168 aa)). GTP-binding positions include 166 to 173 (GLPNAGKS), 191 to 195 (FTTLH), 212 to 215 (DIPG), 279 to 282 (NKID), and 308 to 310 (SGA). Mg(2+) is bound by residues S173 and T193.

This sequence belongs to the TRAFAC class OBG-HflX-like GTPase superfamily. OBG GTPase family. Monomer. Mg(2+) serves as cofactor.

The protein localises to the cytoplasm. Functionally, an essential GTPase which binds GTP, GDP and possibly (p)ppGpp with moderate affinity, with high nucleotide exchange rates and a fairly low GTP hydrolysis rate. Plays a role in control of the cell cycle, stress response, ribosome biogenesis and in those bacteria that undergo differentiation, in morphogenesis control. The protein is GTPase Obg of Ruegeria pomeroyi (strain ATCC 700808 / DSM 15171 / DSS-3) (Silicibacter pomeroyi).